Reading from the N-terminus, the 461-residue chain is A-type ATP synthase subunit B (461 aa).

The protein belongs to the ATPase alpha/beta chains family. In terms of assembly, has multiple subunits with at least A(3), B(3), C, D, E, F, H, I and proteolipid K(x).

It localises to the cell membrane. In terms of biological role, component of the A-type ATP synthase that produces ATP from ADP in the presence of a proton gradient across the membrane. The B chain is a regulatory subunit. The sequence is that of A-type ATP synthase subunit B from Nitrosopumilus maritimus (strain SCM1).